A 357-amino-acid chain; its full sequence is MKNTKTSQEQVIELKLSDRQKKVLKSIVDEYTISATPVSSKLLVQKEFKDQSSATIRNEMMFLEKNGLIEKQHISGGRVPSLKGYDFYNKNLINKNNNVSDNFKMRLHKILSKRYSNIDEILNAAVSIINETTQLPAVVTKTSSDELLKRIDLVKINDNSALVLIVTSSENILTHSIKLDKNTKFNDLQTCFSVLDERLVDTKLSLISSKLDLIVDIVRNKLEEVEYYFSKIVHRVFDFYAYKPNIDSKTYGVKYLTKHSEFEDQQKLNDLLNLLEDSTIWQQIALNKKTDGLAKIMLGNEIGHEHLAIATTQINLANTNHQITVVGPTRMDYAKIKALLDFLKIEIEKILGSTNEH.

Belongs to the HrcA family.

Negative regulator of class I heat shock genes (grpE-dnaK-dnaJ and groELS operons). Prevents heat-shock induction of these operons. The chain is Heat-inducible transcription repressor HrcA from Ureaplasma parvum serovar 3 (strain ATCC 27815 / 27 / NCTC 11736).